A 561-amino-acid chain; its full sequence is Putative transport protein YbjL (561 aa).

Helical transmembrane passes span 8–28 (LLNG…LCLG), 32–52 (LGSV…LLGQ), 66–86 (FMLF…SIFF), 94–114 (MLAL…GKLF), and 158–178 (NLSL…IVGA). RCK C-terminal domains are found at residues 200-288 (RGLD…SFRN) and 292-373 (VFDR…RIGF). A run of 5 helical transmembrane segments spans residues 383–403 (LLAF…TFQF), 406–426 (FSFG…LGFL), 447–467 (FGLM…ISNG), 475–495 (MLIA…LFGA), and 540–560 (AIAN…WPGL).

Belongs to the AAE transporter (TC 2.A.81) family. YbjL subfamily.

The protein resides in the cell membrane. In Salmonella dublin (strain CT_02021853), this protein is Putative transport protein YbjL.